A 221-amino-acid chain; its full sequence is Deoxyribose-phosphate aldolase 1 (221 aa).

Asp89 serves as the catalytic Proton donor/acceptor. Residue Lys152 is the Schiff-base intermediate with acetaldehyde of the active site. Residue Lys181 is the Proton donor/acceptor of the active site.

This sequence belongs to the DeoC/FbaB aldolase family. DeoC type 1 subfamily.

It is found in the cytoplasm. The enzyme catalyses 2-deoxy-D-ribose 5-phosphate = D-glyceraldehyde 3-phosphate + acetaldehyde. The protein operates within carbohydrate degradation; 2-deoxy-D-ribose 1-phosphate degradation; D-glyceraldehyde 3-phosphate and acetaldehyde from 2-deoxy-alpha-D-ribose 1-phosphate: step 2/2. Functionally, catalyzes a reversible aldol reaction between acetaldehyde and D-glyceraldehyde 3-phosphate to generate 2-deoxy-D-ribose 5-phosphate. This is Deoxyribose-phosphate aldolase 1 from Oceanobacillus iheyensis (strain DSM 14371 / CIP 107618 / JCM 11309 / KCTC 3954 / HTE831).